The chain runs to 114 residues: Beta-microseminoprotein E1 (114 aa).

The N-terminal stretch at 1–20 is a signal peptide; sequence MNVLLGGLVIFATFVTLCNG. 5 cysteine pairs are disulfide-bonded: Cys-22–Cys-70, Cys-38–Cys-62, Cys-57–Cys-93, Cys-60–Cys-69, and Cys-84–Cys-107.

It belongs to the beta-microseminoprotein family.

Its subcellular location is the secreted. The sequence is that of Beta-microseminoprotein E1 (MSPE) from Saguinus oedipus (Cotton-top tamarin).